Here is a 195-residue protein sequence, read N- to C-terminus: Phosphoheptose isomerase (195 aa).

The region spanning 36–195 (VSKVLQSGNT…IVEYNLFKME (160 aa)) is the SIS domain. A substrate-binding site is contributed by 51 to 53 (NGG). 2 residues coordinate Zn(2+): H60 and E64. Substrate is bound by residues E64, 95–96 (ND), 121–123 (STS), S126, and Q173. Zn(2+)-binding residues include Q173 and H181.

It belongs to the SIS family. GmhA subfamily. It depends on Zn(2+) as a cofactor.

It is found in the cytoplasm. It catalyses the reaction 2 D-sedoheptulose 7-phosphate = D-glycero-alpha-D-manno-heptose 7-phosphate + D-glycero-beta-D-manno-heptose 7-phosphate. It functions in the pathway carbohydrate biosynthesis; D-glycero-D-manno-heptose 7-phosphate biosynthesis; D-glycero-alpha-D-manno-heptose 7-phosphate and D-glycero-beta-D-manno-heptose 7-phosphate from sedoheptulose 7-phosphate: step 1/1. In terms of biological role, catalyzes the isomerization of sedoheptulose 7-phosphate in D-glycero-D-manno-heptose 7-phosphate. The chain is Phosphoheptose isomerase from Leptospira borgpetersenii serovar Hardjo-bovis (strain JB197).